The chain runs to 653 residues: Calpain-10 (653 aa).

The region spanning 13–321 (LFRDAAFPAA…FDEITIGYPI (309 aa)) is the Calpain catalytic domain. Residues Cys73, His238, and Asn263 contribute to the active site. Domain III regions lie at residues 322–494 (TEAG…VSLS) and 513–653 (EWGT…PSWQ).

Belongs to the peptidase C2 family.

Calcium-regulated non-lysosomal thiol-protease which catalyzes limited proteolysis of substrates involved in cytoskeletal remodeling and signal transduction. May play a role in insulin-stimulated glucose uptake. This chain is Calpain-10 (CAPN10), found in Macaca fascicularis (Crab-eating macaque).